We begin with the raw amino-acid sequence, 174 residues long: Translation initiation factor IF-3 (174 aa).

The protein belongs to the IF-3 family. In terms of assembly, monomer.

The protein localises to the cytoplasm. Functionally, IF-3 binds to the 30S ribosomal subunit and shifts the equilibrium between 70S ribosomes and their 50S and 30S subunits in favor of the free subunits, thus enhancing the availability of 30S subunits on which protein synthesis initiation begins. The protein is Translation initiation factor IF-3 of Xanthobacter autotrophicus (strain ATCC BAA-1158 / Py2).